The chain runs to 336 residues: Pentalenene synthase (336 aa).

Mg(2+)-binding residues include Asp-80, Asp-84, Asn-219, Ser-223, and Glu-227. Positions 80 to 84 match the DDXXD motif motif; the sequence is DDLFD.

It belongs to the terpene synthase family. As to quaternary structure, monomer. The cofactor is Mg(2+).

The catalysed reaction is (2E,6E)-farnesyl diphosphate = pentalenene + diphosphate. The protein operates within antibiotic biosynthesis; neopentalenolactone biosynthesis. Catalyzes the cyclization of farnesyl diphosphate (FPP) to the tricyclic sesquiterpene pentalenene in the biosynthesis of neopentalenolactone antibiotic. This chain is Pentalenene synthase (ptlA), found in Streptomyces avermitilis (strain ATCC 31267 / DSM 46492 / JCM 5070 / NBRC 14893 / NCIMB 12804 / NRRL 8165 / MA-4680).